The following is a 448-amino-acid chain: Glutamyl-tRNA reductase (448 aa).

Residues 49-52 (TCNR), Ser109, 114-116 (ETQ), and Gln120 each bind substrate. Catalysis depends on Cys50, which acts as the Nucleophile. 189–194 (GAGEMS) is an NADP(+) binding site.

This sequence belongs to the glutamyl-tRNA reductase family. In terms of assembly, homodimer.

It catalyses the reaction (S)-4-amino-5-oxopentanoate + tRNA(Glu) + NADP(+) = L-glutamyl-tRNA(Glu) + NADPH + H(+). It functions in the pathway porphyrin-containing compound metabolism; protoporphyrin-IX biosynthesis; 5-aminolevulinate from L-glutamyl-tRNA(Glu): step 1/2. Functionally, catalyzes the NADPH-dependent reduction of glutamyl-tRNA(Glu) to glutamate 1-semialdehyde (GSA). The chain is Glutamyl-tRNA reductase from Staphylococcus aureus (strain Mu3 / ATCC 700698).